The chain runs to 141 residues: Cholinesterase (141 aa).

Residue N39 is glycosylated (N-linked (GlcNAc...) asparagine). Residue 49–50 (GG) coordinates substrate. Residue S131 is the Acyl-ester intermediate of the active site. The residue at position 131 (S131) is a Phosphoserine.

Belongs to the type-B carboxylesterase/lipase family. In terms of assembly, homotetramer; disulfide-linked. Dimer of dimers. In terms of tissue distribution, present in most cells except erythrocytes.

The protein localises to the secreted. The enzyme catalyses an acylcholine + H2O = a carboxylate + choline + H(+). In terms of biological role, esterase with broad substrate specificity. Contributes to the inactivation of the neurotransmitter acetylcholine. Can degrade neurotoxic organophosphate esters. The protein is Cholinesterase (BCHE) of Canis lupus familiaris (Dog).